The following is a 273-amino-acid chain: Putative pyruvate, phosphate dikinase regulatory protein (273 aa).

153 to 160 (GVSRTSKS) is an ADP binding site.

It belongs to the pyruvate, phosphate/water dikinase regulatory protein family. PDRP subfamily.

The enzyme catalyses N(tele)-phospho-L-histidyl/L-threonyl-[pyruvate, phosphate dikinase] + ADP = N(tele)-phospho-L-histidyl/O-phospho-L-threonyl-[pyruvate, phosphate dikinase] + AMP + H(+). The catalysed reaction is N(tele)-phospho-L-histidyl/O-phospho-L-threonyl-[pyruvate, phosphate dikinase] + phosphate + H(+) = N(tele)-phospho-L-histidyl/L-threonyl-[pyruvate, phosphate dikinase] + diphosphate. In terms of biological role, bifunctional serine/threonine kinase and phosphorylase involved in the regulation of the pyruvate, phosphate dikinase (PPDK) by catalyzing its phosphorylation/dephosphorylation. This is Putative pyruvate, phosphate dikinase regulatory protein from Ehrlichia ruminantium (strain Gardel).